A 372-amino-acid chain; its full sequence is Protein-glutamate methylesterase/protein-glutamine glutaminase (372 aa).

The Response regulatory domain maps to 5 to 123; that stretch reads RVLIVDDSAL…SANLTTVSET (119 aa). 4-aspartylphosphate is present on D56. Residues 140 to 151 are compositionally biased toward polar residues; that stretch reads GTRSTDTTNSFS. The tract at residues 140 to 177 is disordered; it reads GTRSTDTTNSFSEPFKSTIPKPMTAAEPQKEEKPTPQR. Residues 167–177 show a composition bias toward basic and acidic residues; it reads PQKEEKPTPQR. In terms of domain architecture, CheB-type methylesterase spans 178 to 364; it reads EHGNIQIIAI…VSLDNMAAAI (187 aa). Catalysis depends on residues S190, H217, and D313.

The protein belongs to the CheB family. In terms of processing, phosphorylated by CheA. Phosphorylation of the N-terminal regulatory domain activates the methylesterase activity.

Its subcellular location is the cytoplasm. The enzyme catalyses [protein]-L-glutamate 5-O-methyl ester + H2O = L-glutamyl-[protein] + methanol + H(+). It catalyses the reaction L-glutaminyl-[protein] + H2O = L-glutamyl-[protein] + NH4(+). Its function is as follows. Involved in chemotaxis. Part of a chemotaxis signal transduction system that modulates chemotaxis in response to various stimuli. Catalyzes the demethylation of specific methylglutamate residues introduced into the chemoreceptors (methyl-accepting chemotaxis proteins or MCP) by CheR. Also mediates the irreversible deamidation of specific glutamine residues to glutamic acid. In Treponema denticola (strain ATCC 35405 / DSM 14222 / CIP 103919 / JCM 8153 / KCTC 15104), this protein is Protein-glutamate methylesterase/protein-glutamine glutaminase.